Here is a 530-residue protein sequence, read N- to C-terminus: MARLFTLSESKYYLMALDAGTGSIRAVIFDLEGNQIAVGQAEWRHLAVPDVPGSMEFDLNKNWQLACECMRQALHNAGIAPEYIAAVSACSMREGIVLYNNEGAPIWACANVDARAAREVSELKELHNNTFENEVYRATGQTLALSAIPRLLWLAHHRSDIYRQASTITMISDWLAYMLSGELAVDPSNAGTTGLLDLTTRDWKPALLDMAGLRADILSPVKETGTLLGVVSSQAAELCGLKAGTPVVVGGGDVQLGCLGLGVVRPAQTAVLGGTFWQQVVNLAAPVTDPEMNVRVNPHVIPGMVQAESISFFTGLTMRWFRDAFCAEEKLIAERLGIDTYTLLEEMASRVPPGSWGVMPIFSDRMRFKTWYHAAPSFINLSIDPDKCNKATLFRALEENAAIVSACNLQQIADFSNIHPSSLVFAGGGSKGKLWSQILADVSGLPVNIPVVKEATALGCAIAAGVGAGIFSSMAETGERLVRWERTHTPDPEKHELYQDSRDKWQAVYQDQLGLVDHGLTTSLWKAPGL.

Belongs to the FGGY kinase family.

It is found in the cytoplasm. It carries out the reaction (S)-4,5-dihydroxypentane-2,3-dione + ATP = (2S)-2-hydroxy-3,4-dioxopentyl phosphate + ADP + H(+). Its function is as follows. Catalyzes the phosphorylation of autoinducer-2 (AI-2) to phospho-AI-2, which subsequently inactivates the transcriptional regulator LsrR and leads to the transcription of the lsr operon. Phosphorylates the ring-open form of (S)-4,5-dihydroxypentane-2,3-dione (DPD), which is the precursor to all AI-2 signaling molecules, at the C5 position. This Escherichia coli (strain K12 / DH10B) protein is Autoinducer-2 kinase.